The chain runs to 294 residues: Undecaprenyl-diphosphatase (294 aa).

A run of 6 helical transmembrane segments spans residues 39 to 59 (PGAAFTAIIQIGTELAVILYF), 93 to 113 (TQMGWFIIIGTLPILIAGLLF), 123 to 143 (NLWITVTVLIIFGILLWVVDA), 197 to 217 (VSFLMAIPAVFGAGILEAVSA), 234 to 254 (ATIAATIVAFVVGYVVIIGFL), and 265 to 285 (FAIYRIALAVVVALLLICGVL).

It belongs to the UppP family.

Its subcellular location is the cell membrane. The catalysed reaction is di-trans,octa-cis-undecaprenyl diphosphate + H2O = di-trans,octa-cis-undecaprenyl phosphate + phosphate + H(+). In terms of biological role, catalyzes the dephosphorylation of undecaprenyl diphosphate (UPP). Confers resistance to bacitracin. The chain is Undecaprenyl-diphosphatase from Bifidobacterium adolescentis (strain ATCC 15703 / DSM 20083 / NCTC 11814 / E194a).